The primary structure comprises 1322 residues: Chitin synthase chs-1 (1322 aa).

Topologically, residues 1 to 39 (MNDGENYWNAFRSHKRSATDGPTLSPWMVTVLQATKLLL) are extracellular. The chain crosses the membrane as a helical span at residues 40–60 (FALCNIVLTLGSVFSKLIVLI). The Cytoplasmic segment spans residues 61–128 (MATNIVPRAH…KGQCGQLVKS (68 aa)). A helical membrane pass occupies residues 129 to 149 (VVVLESLRAIGLAVLSFHVFP). Over 150-156 (QLDLARC) the chain is Extracellular. The helical transmembrane segment at 157–177 (LVLSACFPLVAVLQRSLVAMV) threads the bilayer. At 178-193 (SAARTGRSFRNRLGRC) the chain is on the cytoplasmic side. A helical transmembrane segment spans residues 194-214 (FVAIPHVIMFLVLMSSCYVWA). At 215 to 221 (LFDNKFT) the chain is on the extracellular side. Residues 222–242 (AIIALPIGVICTSAGFWESWI) traverse the membrane as a helical segment. Residues 243–269 (DTTHSGTSFDELYRLKYAVRKMNTTTK) are Cytoplasmic-facing. The helical transmembrane segment at 270 to 290 (LIVSLMRIVCTVSVLVSAVYI) threads the bilayer. At 291–316 (NDHKKLNSSHFVKAFFSFSTRQPHTR) the chain is on the extracellular side. Asn-297 carries an N-linked (GlcNAc...) asparagine glycan. The chain crosses the membrane as a helical span at residues 317–337 (LLLLATGIIVLHFVMRGISRF). Topologically, residues 338 to 342 (LAALD) are cytoplasmic. The chain crosses the membrane as a helical span at residues 343–363 (LHPFSFVHPLSIAPLIAYGYV). The Extracellular segment spans residues 364–396 (RYACQSPTCSIARRLARFGLHWVCDQWFQSARG). A helical transmembrane segment spans residues 397 to 417 (IASPDFYICLIWLLVGCYRGW). The Cytoplasmic segment spans residues 418 to 836 (RLVRQRYFDT…AISYAYIAYQ (419 aa)). Residues 455-486 (LNRQEKTMLTEEEDISDENDELRIRNDEVDRV) are a coiled coil. A helical transmembrane segment spans residues 837–857 (FLVIFFSMLGPAIIFTMLVFA). Residues 858-865 (QVAAFELR) are Extracellular-facing. The helical transmembrane segment at 866–886 (GSDVMLYNGIPIGFFIVLCFT) threads the bilayer. The Cytoplasmic portion of the chain corresponds to 887-892 (TESNIQ). The chain crosses the membrane as a helical span at residues 893 to 913 (LIYAKYMSIAYAFVMLAVLVA). At 914 to 922 (TSSQIVLET) the chain is on the extracellular side. Residues 923–943 (VLAPTSLFIVTMVGIFFFAAC) form a helical membrane-spanning segment. Residues 944–951 (LHPKEFTN) lie on the Cytoplasmic side of the membrane. Residues 952-972 (IIHGVVFFLMIPSTYVFLTLY) form a helical membrane-spanning segment. At 973–1148 (SLINLNVITW…AVAEGLASLR (176 aa)) the chain is on the extracellular side. Positions 1019 to 1053 (ISCREKKEHEERREKMEKKMQRMELALRSIESGAD) form a coiled coil. Residues 1149–1169 (NQIAFTILLVNSLLALAIFLI) traverse the membrane as a helical segment. Over 1170-1209 (QKHKNVLSIKFSPIKNFRWTKMNEMTGQYEETDEPLKIDP) the chain is Cytoplasmic. A helical transmembrane segment spans residues 1210-1230 (LGMGIVVFLLIILFVQTLGML). At 1231–1322 (LHRLNTMIGA…MQRSALSTTE (92 aa)) the chain is on the extracellular side.

This sequence belongs to the chitin synthase family. Class IV subfamily.

The protein localises to the cell membrane. The catalysed reaction is [(1-&gt;4)-N-acetyl-beta-D-glucosaminyl](n) + UDP-N-acetyl-alpha-D-glucosamine = [(1-&gt;4)-N-acetyl-beta-D-glucosaminyl](n+1) + UDP + H(+). Essential for the embryonic synthesis of chitin, a component of the eggshell. This is Chitin synthase chs-1 from Caenorhabditis elegans.